Reading from the N-terminus, the 202-residue chain is FMN-dependent NADH:quinone oxidoreductase (202 aa).

FMN-binding positions include Ser10 and 95–98 (MYNF).

Belongs to the azoreductase type 1 family. In terms of assembly, homodimer. Requires FMN as cofactor.

It carries out the reaction 2 a quinone + NADH + H(+) = 2 a 1,4-benzosemiquinone + NAD(+). It catalyses the reaction N,N-dimethyl-1,4-phenylenediamine + anthranilate + 2 NAD(+) = 2-(4-dimethylaminophenyl)diazenylbenzoate + 2 NADH + 2 H(+). Functionally, quinone reductase that provides resistance to thiol-specific stress caused by electrophilic quinones. Its function is as follows. Also exhibits azoreductase activity. Catalyzes the reductive cleavage of the azo bond in aromatic azo compounds to the corresponding amines. The sequence is that of FMN-dependent NADH:quinone oxidoreductase from Alkalilimnicola ehrlichii (strain ATCC BAA-1101 / DSM 17681 / MLHE-1).